Here is a 269-residue protein sequence, read N- to C-terminus: Diaminopimelate epimerase (269 aa).

Substrate-binding residues include N15, Q49, and N66. The Proton donor role is filled by C75. Residues 76 to 77 (GN), N155, N187, and 204 to 205 (ER) each bind substrate. Catalysis depends on C213, which acts as the Proton acceptor. A substrate-binding site is contributed by 214-215 (GS).

This sequence belongs to the diaminopimelate epimerase family. In terms of assembly, homodimer.

The protein resides in the cytoplasm. It carries out the reaction (2S,6S)-2,6-diaminopimelate = meso-2,6-diaminopimelate. Its pathway is amino-acid biosynthesis; L-lysine biosynthesis via DAP pathway; DL-2,6-diaminopimelate from LL-2,6-diaminopimelate: step 1/1. Its function is as follows. Catalyzes the stereoinversion of LL-2,6-diaminopimelate (L,L-DAP) to meso-diaminopimelate (meso-DAP), a precursor of L-lysine and an essential component of the bacterial peptidoglycan. In Rickettsia bellii (strain OSU 85-389), this protein is Diaminopimelate epimerase.